The sequence spans 615 residues: MLLARMNPQVQPENGGAGPGSEQPPRKRKEVLVVKERNGVQCLLASRDGDEQPRETWGKKIDFLLSVVGFAVDLANVWRFPYLCYKNGGGAFLIPYTLFLIIAGMPLFYMELALGQYNREGAATVWKICPFFKGVGYAVILIALYVGFYYNVIIAWSLYYLFSSFTPTLPWTDCGHAWNSPNCTDPKLLNSSVLGNHTKYSKYKFTPAAEFYERGVLHLHESSGIHDIGLPQWQLLLCLIIVVIVLFFSLWKGVKTSGKVVWITATLPYLVLFVLLVHGITLPGASNGINAYLHIDFYRLKEATVWIDAATQIFFSLGAGFGVLIAFASYNKFDNNCYRDALLTSTINCVTSFISGFAIFSILGYMAHEHKVNIEDVATEGAGLVFILYPEAISTLSGSTFWAIVFFIMLLALGIDSSMGGMEAVITGLADDFQVLKRHRKLFTFAVSFGTFLLALFCITKGGIYVLTLLDTFAAGTSILFAVLMEAIGVSWFYGVDRFSNDIQQMMGFKPGLYWRLCWKFVSPAFLLFVVIVSIINFKPLTYDDYIFPLWANWVGWGIAGSSMVLVPAYIVYKFFSTRGSIRERLAYGITPASEHHLVAQRDIRQFQLQHWLAI.

Residues 1–28 (MLLARMNPQVQPENGGAGPGSEQPPRKR) form a disordered region. Over 1–60 (MLLARMNPQVQPENGGAGPGSEQPPRKRKEVLVVKERNGVQCLLASRDGDEQPRETWGKK) the chain is Cytoplasmic. A helical transmembrane segment spans residues 61 to 86 (IDFLLSVVGFAVDLANVWRFPYLCYK). The Na(+) site is built by Gly-69, Ala-71, and Val-72. Asp-73 contributes to the (R)-noradrenaline binding site. Asp-73 is a dopamine binding site. A Na(+)-binding site is contributed by Asn-76. Positions 85 and 86 each coordinate (R)-noradrenaline. Over 87 to 90 (NGGG) the chain is Extracellular. Residues 91-114 (AFLIPYTLFLIIAGMPLFYMELAL) traverse the membrane as a helical segment. Residues 115–133 (GQYNREGAATVWKICPFFK) are Cytoplasmic-facing. A helical membrane pass occupies residues 134-164 (GVGYAVILIALYVGFYYNVIIAWSLYYLFSS). Positions 143 and 147 each coordinate (R)-noradrenaline. Dopamine is bound at residue Ala-143. The Extracellular portion of the chain corresponds to 165 to 231 (FTPTLPWTDC…SSGIHDIGLP (67 aa)). A disulfide bridge connects residues Cys-174 and Cys-183. 3 N-linked (GlcNAc...) asparagine glycosylation sites follow: Asn-182, Asn-190, and Asn-196. Residues 232-252 (QWQLLLCLIIVVIVLFFSLWK) traverse the membrane as a helical segment. The Cytoplasmic segment spans residues 253–255 (GVK). A helical membrane pass occupies residues 256-280 (TSGKVVWITATLPYLVLFVLLVHGI). Topologically, residues 281–304 (TLPGASNGINAYLHIDFYRLKEAT) are extracellular. The helical transmembrane segment at 305–330 (VWIDAATQIFFSLGAGFGVLIAFASY) threads the bilayer. (R)-noradrenaline is bound at residue Phe-315. Position 315 (Phe-315) interacts with dopamine. Ser-316 contributes to the Na(+) binding site. Residues 331–336 (NKFDNN) lie on the Cytoplasmic side of the membrane. A helical membrane pass occupies residues 337 to 360 (CYRDALLTSTINCVTSFISGFAIF). Asn-348 is a Na(+) binding site. Topologically, residues 361 to 400 (SILGYMAHEHKVNIEDVATEGAGLVFILYPEAISTLSGST) are extracellular. Glu-380 is a (R)-noradrenaline binding site. Position 380 (Glu-380) interacts with dopamine. Residues 401–426 (FWAIVFFIMLLALGIDSSMGGMEAVI) form a helical membrane-spanning segment. Na(+)-binding residues include Asp-416 and Ser-417. Topologically, residues 427-441 (TGLADDFQVLKRHRK) are cytoplasmic. A helical transmembrane segment spans residues 442–462 (LFTFAVSFGTFLLALFCITKG). Gly-463 is a topological domain (extracellular). A helical membrane pass occupies residues 464 to 490 (IYVLTLLDTFAAGTSILFAVLMEAIGV). Over 491–520 (SWFYGVDRFSNDIQQMMGFKPGLYWRLCWK) the chain is Cytoplasmic. The helical transmembrane segment at 521 to 543 (FVSPAFLLFVVIVSIINFKPLTY) threads the bilayer. At 544–546 (DDY) the chain is on the extracellular side. A helical transmembrane segment spans residues 547–567 (IFPLWANWVGWGIAGSSMVLV). The Cytoplasmic portion of the chain corresponds to 568-615 (PAYIVYKFFSTRGSIRERLAYGITPASEHHLVAQRDIRQFQLQHWLAI).

This sequence belongs to the sodium:neurotransmitter symporter (SNF) (TC 2.A.22) family. SLC6A2 subfamily. As to quaternary structure, monomer. Can form homodimers in the cell membrane; homodimerization is mostly mediated by cholesterol and lipids, and regulates neurotransmitter transport activity. Interacts with PRKCABP. In terms of processing, palmitoylated. Palmitoylation regulates protein levels and neurotransmitter transport.

The protein localises to the cell membrane. It localises to the cell projection. Its subcellular location is the axon. It is found in the synapse. The protein resides in the synaptosome. The catalysed reaction is (R)-noradrenaline(out) + chloride(out) + Na(+)(out) = (R)-noradrenaline(in) + chloride(in) + Na(+)(in). It catalyses the reaction dopamine(out) + chloride(out) + Na(+)(out) = dopamine(in) + chloride(in) + Na(+)(in). The enzyme catalyses dopamine(out) + chloride(out) + 2 Na(+)(out) = dopamine(in) + chloride(in) + 2 Na(+)(in). Inhibited by nisoxetine, oxaprotiline and desipramin. In terms of biological role, mediates sodium- and chloride-dependent transport of norepinephrine (also known as noradrenaline), the primary signaling neurotransmitter in the autonomic sympathetic nervous system. Is responsible for norepinephrine re-uptake and clearance from the synaptic cleft, thus playing a crucial role in norepinephrine inactivation and homeostasis. Can also mediate sodium- and chloride-dependent transport of dopamine. This is Sodium-dependent noradrenaline transporter (SLC6A2) from Bos taurus (Bovine).